The sequence spans 339 residues: Probable cytosolic iron-sulfur protein assembly protein CIAO1 (339 aa).

7 WD repeats span residues 14 to 53, 59 to 98, 103 to 142, 148 to 187, 192 to 231, 250 to 289, and 301 to 339; these read HPDS…WICK, GHQR…FECV, GHEN…EYEC, SHTQ…WVCC, GHES…NEQG, FHTR…DPQQ, and AHSQ…PAGL. The LYR motif; required for interaction with HSC20 signature appears at 176–178; that stretch reads LYQ.

The protein belongs to the WD repeat CIA1 family. As to quaternary structure, component of the CIA complex. Interacts with CIAO2A and forms a complex with CIAO2B and MMS19; the interactions with CIAO2A and CIAO2B are mutually exclusive. Interacts with CHD1L, ERCC2, IREB2 and POLD1. Component of the MMXD complex, which includes CIAO1, ERCC2, CIAO2B, MMS19 and SLC25A5. Interacts with WT1. Interacts with CIAO3. Interacts (via LYR motif) with HSC20.

It localises to the cytoplasm. Key component of the cytosolic iron-sulfur protein assembly (CIA) complex, a multiprotein complex that mediates the incorporation of iron-sulfur cluster into extramitochondrial Fe/S proteins. As a CIA complex component, interacts specifically with CIAO2A or CIAO2B and MMS19 to assist different branches of iron-sulfur protein assembly, depending of its interactors. The complex CIAO1:CIAO2B:MMS19 binds to and facilitates the assembly of most cytosolic-nuclear Fe/S proteins. CIAO1:CIAO2A specifically matures ACO1 and stabilizes IREB2. Seems to specifically modulate the transactivation activity of WT1. As part of the mitotic spindle-associated MMXD complex it may play a role in chromosome segregation. In Mus musculus (Mouse), this protein is Probable cytosolic iron-sulfur protein assembly protein CIAO1.